The chain runs to 218 residues: uncharacterized protein (218 aa).

5 helical membrane-spanning segments follow: residues 27 to 49 (IALE…GFLA), 57 to 77 (GGVL…GYWV), 115 to 135 (VFFG…AGIV), 142 to 162 (FLLY…SLAY), and 180 to 200 (FSWF…VFHF).

It belongs to the DedA family.

The protein localises to the cell membrane. This is an uncharacterized protein from Synechocystis sp. (strain ATCC 27184 / PCC 6803 / Kazusa).